A 115-amino-acid polypeptide reads, in one-letter code: Ribonuclease P protein component 4 (115 aa).

4 residues coordinate Zn(2+): C66, C69, C96, and C99.

It belongs to the eukaryotic/archaeal RNase P protein component 4 family. In terms of assembly, consists of a catalytic RNA component and at least 4-5 protein subunits. Zn(2+) is required as a cofactor.

The protein localises to the cytoplasm. The catalysed reaction is Endonucleolytic cleavage of RNA, removing 5'-extranucleotides from tRNA precursor.. Its function is as follows. Part of ribonuclease P, a protein complex that generates mature tRNA molecules by cleaving their 5'-ends. The sequence is that of Ribonuclease P protein component 4 from Hyperthermus butylicus (strain DSM 5456 / JCM 9403 / PLM1-5).